Consider the following 502-residue polypeptide: Alpha-globin transcription factor CP2 (502 aa).

The Grh/CP2 DB domain occupies 63–300 (EILPFQYVLC…SPGFNSSHSS (238 aa)). Positions 133 to 386 (EHQQLEGWRW…LFNALKGRMV (254 aa)) are DNA-binding. The span at 241 to 265 (KGADRKQKIDREKMEKRTPHEKEKY) shows a compositional bias: basic and acidic residues. Disordered regions lie at residues 241-268 (KGADRKQKIDREKMEKRTPHEKEKYQPS) and 294-326 (FNSSHSSFSLGEGNGSPNHQPEPPPPVTDNLLP). A Phosphoserine modification is found at Ser-353.

It belongs to the grh/CP2 family. CP2 subfamily. In terms of assembly, binds to DNA as a dimer. Interacts with UBP1 and PIAS1, and is probably part of a complex containing TFCP2, UBP1 and PIAS1. Component of the SSP (stage selector protein) complex, which appears to be a heteromer of TFCP2 and 2 copies of NFE4.

It is found in the nucleus. In terms of biological role, binds a variety of cellular promoters including fibrinogen, alpha-globin promoters. Activation of the alpha-globin promoter in erythroid cells is via synergistic interaction with UBP1. Functions as part of the SSP (stage selector protein) complex. Facilitates the interaction of the gamma-globin genes with enhancer elements contained in the locus control region in fetal erythroid cells. Interacts by binding to the stage selector element (SSE) in the proximal gamma-globin promoter. This Mus musculus (Mouse) protein is Alpha-globin transcription factor CP2 (Tfcp2).